A 428-amino-acid polypeptide reads, in one-letter code: Palmitoyltransferase pfa4 (428 aa).

The Cytoplasmic portion of the chain corresponds to 1-10; it reads MLCRSFNISQ. Residues 11–31 form a helical membrane-spanning segment; it reads LAIPFVSVLISFLAYTSQLFF. Residues 32 to 43 lie on the Lumenal side of the membrane; it reads YYFEEAPLRSEE. A helical membrane pass occupies residues 44-61; sequence FWRLNIFAVCIWVCYYRA. The Cytoplasmic portion of the chain corresponds to 62–134; that stretch reads CTVDPGRIPK…SNCVSHFTYP (73 aa). The DHHC domain maps to 91 to 141; it reads RWCRRCEAFKPPRAHHCKTCQRCIPKMDHHCPWTSNCVSHFTYPHFMRFLF. The active-site S-palmitoyl cysteine intermediate is the C121. The chain crosses the membrane as a helical span at residues 135-155; that stretch reads HFMRFLFYAVVGMGYLETLLF. The Lumenal segment spans residues 156-177; that stretch reads ERASIVWASRHLPSYLGPGLGQ. Residues 178-198 traverse the membrane as a helical segment; sequence LVHLFILLVVNSLTWLALFIL. Topologically, residues 199–428 are cytoplasmic; that stretch reads LLRSIWSLAL…GILMQRRRQQ (230 aa). Residues 339–400 form a disordered region; sequence QRSNDASHSG…WKNSEGDRLR (62 aa). Residues 360 to 373 show a composition bias toward basic and acidic residues; sequence DRFNENKAKERLSE. Acidic residues predominate over residues 374–388; that stretch reads SESDFSDDEEVQDGE. A compositionally biased stretch (basic and acidic residues) spans 389–400; sequence EGWKNSEGDRLR.

The protein belongs to the DHHC palmitoyltransferase family. PFA4 subfamily.

It is found in the endoplasmic reticulum membrane. The catalysed reaction is L-cysteinyl-[protein] + hexadecanoyl-CoA = S-hexadecanoyl-L-cysteinyl-[protein] + CoA. In terms of biological role, mediates the reversible addition of palmitate to target proteins, thereby regulating their membrane association and biological function. In Aspergillus fumigatus (strain ATCC MYA-4609 / CBS 101355 / FGSC A1100 / Af293) (Neosartorya fumigata), this protein is Palmitoyltransferase pfa4.